The primary structure comprises 290 residues: tRNA(Ile)-lysidine synthase (290 aa).

An ATP-binding site is contributed by 12-17 (SGGSDS).

Belongs to the tRNA(Ile)-lysidine synthase family.

The protein localises to the cytoplasm. It catalyses the reaction cytidine(34) in tRNA(Ile2) + L-lysine + ATP = lysidine(34) in tRNA(Ile2) + AMP + diphosphate + H(+). Its function is as follows. Ligates lysine onto the cytidine present at position 34 of the AUA codon-specific tRNA(Ile) that contains the anticodon CAU, in an ATP-dependent manner. Cytidine is converted to lysidine, thus changing the amino acid specificity of the tRNA from methionine to isoleucine. This chain is tRNA(Ile)-lysidine synthase, found in Mycoplasma genitalium (strain ATCC 33530 / DSM 19775 / NCTC 10195 / G37) (Mycoplasmoides genitalium).